We begin with the raw amino-acid sequence, 511 residues long: GMP synthase [glutamine-hydrolyzing] (511 aa).

The Glutamine amidotransferase type-1 domain occupies 3–193 (KILILDFGGQ…VYSICDVAGD (191 aa)). Cys-80 (nucleophile) is an active-site residue. Residues His-167 and Glu-169 contribute to the active site. Residues 194–384 (WEPKNIKLEK…LDIPYQNVYR (191 aa)) form the GMPS ATP-PPase domain. 221–227 (SGGVDSL) is a binding site for ATP.

In terms of assembly, homodimer.

The catalysed reaction is XMP + L-glutamine + ATP + H2O = GMP + L-glutamate + AMP + diphosphate + 2 H(+). It functions in the pathway purine metabolism; GMP biosynthesis; GMP from XMP (L-Gln route): step 1/1. Its function is as follows. Catalyzes the synthesis of GMP from XMP. In Malacoplasma penetrans (strain HF-2) (Mycoplasma penetrans), this protein is GMP synthase [glutamine-hydrolyzing].